Reading from the N-terminus, the 590-residue chain is V-type ATP synthase alpha chain (590 aa).

232–239 (GPFGSGKT) is an ATP binding site.

The protein belongs to the ATPase alpha/beta chains family.

It carries out the reaction ATP + H2O + 4 H(+)(in) = ADP + phosphate + 5 H(+)(out). Its function is as follows. Produces ATP from ADP in the presence of a proton gradient across the membrane. The V-type alpha chain is a catalytic subunit. The chain is V-type ATP synthase alpha chain from Thermoanaerobacter pseudethanolicus (strain ATCC 33223 / 39E) (Clostridium thermohydrosulfuricum).